A 311-amino-acid chain; its full sequence is tRNA dimethylallyltransferase (311 aa).

10-17 (GPTAVGKT) serves as a coordination point for ATP. 12–17 (TAVGKT) provides a ligand contact to substrate. The interval 35 to 38 (DSMQ) is interaction with substrate tRNA.

This sequence belongs to the IPP transferase family. As to quaternary structure, monomer. Mg(2+) serves as cofactor.

It carries out the reaction adenosine(37) in tRNA + dimethylallyl diphosphate = N(6)-dimethylallyladenosine(37) in tRNA + diphosphate. Catalyzes the transfer of a dimethylallyl group onto the adenine at position 37 in tRNAs that read codons beginning with uridine, leading to the formation of N6-(dimethylallyl)adenosine (i(6)A). The polypeptide is tRNA dimethylallyltransferase (Anoxybacillus flavithermus (strain DSM 21510 / WK1)).